The following is a 256-amino-acid chain: MLLVFDVGNTNMVLGIYKGDKLVNYWRIKTDREKTSDEYGILISNLFDYDNVNISDIDDVIISSVVPNVMHSLENFCIKYCKKQPLIVGPGIKTGLNIKYDNPKQVGADRIVNAVAGIEKYGAPSILVDFGTATTFCAISEKGEYLGGTIAPGIKISSEALFQSASKLPRVELAKPGMTICKSTVSAMQSGIIYGYVGLVDKIISIMKKELNCDDVKVIATGGLAKLIASETKSIDYVDGFLTLEGLRIIYEKNQE.

6-13 (DVGNTNMV) is an ATP binding site. Substrate contacts are provided by residues Y100 and 107–110 (GADR). The Proton acceptor role is filled by D109. Position 129 (D129) interacts with K(+). Residue T132 coordinates ATP. Substrate is bound at residue T184.

The protein belongs to the type III pantothenate kinase family. As to quaternary structure, homodimer. The cofactor is NH4(+). K(+) is required as a cofactor.

Its subcellular location is the cytoplasm. It catalyses the reaction (R)-pantothenate + ATP = (R)-4'-phosphopantothenate + ADP + H(+). Its pathway is cofactor biosynthesis; coenzyme A biosynthesis; CoA from (R)-pantothenate: step 1/5. Its function is as follows. Catalyzes the phosphorylation of pantothenate (Pan), the first step in CoA biosynthesis. This Clostridioides difficile (strain 630) (Peptoclostridium difficile) protein is Type III pantothenate kinase.